Consider the following 1136-residue polypeptide: Collagen alpha-1(XIX) chain (1136 aa).

The first 23 residues, 1–23 (MRHTGSWKLWTWVTTFLLPACTC), serve as a signal peptide directing secretion. Asparagine 47 carries an N-linked (GlcNAc...) asparagine glycan. The region spanning 47-231 (NKSELSGFDL…LHQLRIYCNA (185 aa)) is the Laminin G-like domain. 4 disordered regions span residues 252-272 (DFGS…SSYL), 289-673 (EEAG…PGDP), 699-1005 (GLKS…TPAD), and 1043-1136 (SAQA…AGGK). The segment covering 254-266 (GSTTSSWGTSNTG) has biased composition (low complexity). The interval 289–348 (EEAGLPGTLRSIGHKGDKGEPGEHGLDGTPGLPGQKGEQGLEGIKGEIGEKGEPGAKGDS) is triple-helical region 1 (COL1). Collagen-like domains follow at residues 292-346 (GLPG…GAKG), 347-388 (DSGL…ALTG), and 389-430 (SIGI…GLQG). 2 stretches are compositionally biased toward basic and acidic residues: residues 302 to 314 (HKGD…EHGL) and 332 to 344 (IKGE…EPGA). Residues 367-426 (GPPGPKGDKGDMGPPGPPALTGSIGIQGPQGPPGKEGQRGRRGKTGPPGNPGPPGPPGPP) form a triple-helical region 2 (COL2) region. Over residues 387–401 (TGSIGIQGPQGPPGK) the composition is skewed to low complexity. A compositionally biased stretch (pro residues) spans 414–426 (PGNPGPPGPPGPP). Residues 428 to 437 (LQGLQQPFGG) are compositionally biased toward low complexity. A triple-helical region 3 (COL3) region spans residues 442-682 (GTGEHGASGP…PIALPLLGDI (241 aa)). Over residues 472–490 (HKGEPGEPLTKGEKGDRGE) the composition is skewed to basic and acidic residues. 2 stretches are compositionally biased toward low complexity: residues 511 to 523 (LLGS…QQGP) and 567 to 577 (PGLKGDAGPPG). 6 Collagen-like domains span residues 519 to 577 (GQQG…GPPG), 578 to 618 (ISLP…GPPG), 620 to 673 (GIPG…PGDP), 722 to 777 (KGDV…GPPG), 778 to 810 (LTGR…GPPG), and 833 to 891 (GYPG…APGP). Over residues 634 to 645 (PGIQGPRGLPGL) the composition is skewed to low complexity. Residues 694–812 (QANVPGLKSI…PGPPGPPGVP (119 aa)) form a triple-helical region 4 (COL4) region. 2 stretches are compositionally biased toward basic and acidic residues: residues 714-725 (GKYDPAARKGDV) and 737-758 (EGPK…KGDE). Positions 764 to 788 (PGLSGAPGPTGPPGLTGRTGHPGPT) are enriched in low complexity. Composition is skewed to pro residues over residues 800-811 (PGKPGPPGPPGV) and 834-846 (YPGP…PKGD). The tract at residues 827–1006 (GGVNVPGYPG…PGIPGTPADA (180 aa)) is triple-helical region 5 (COL5). Positions 877 to 886 (PGIAGISGKP) are enriched in low complexity. Residues 937-948 (PGDRGPKGERGD) are compositionally biased toward basic and acidic residues. The Cell attachment site motif lies at 946 to 948 (RGD). The interval 1048 to 1105 (GRPGPPGKDGLPGPPGDPGPQGYRGQKGERGEPGIGLPGSPGLPGSSAVGLPGSPGAP) is triple-helical region 6 (COL6). Residues 1087–1101 (SPGLPGSSAVGLPGS) show a composition bias toward low complexity. Residues 1102-1113 (PGAPGPQGPPGP) show a composition bias toward pro residues.

Belongs to the fibril-associated collagens with interrupted helices (FACIT) family. In terms of assembly, oligomer; disulfide-linked. Prolines at the third position of the tripeptide repeating unit (G-X-Y) are hydroxylated in some or all of the chains.

It is found in the secreted. Its subcellular location is the extracellular space. It localises to the extracellular matrix. Its function is as follows. May act as a cross-bridge between fibrils and other extracellular matrix molecules. Involved in skeletal myogenesis in the developing esophagus. May play a role in organization of the pericellular matrix or the sphinteric smooth muscle. The chain is Collagen alpha-1(XIX) chain from Mus musculus (Mouse).